A 32-amino-acid chain; its full sequence is DNA-binding protein HU (32 aa).

This sequence belongs to the bacterial histone-like protein family.

Its function is as follows. Histone-like DNA-binding protein which is capable of wrapping DNA to stabilize it, and thus to prevent its denaturation under extreme environmental conditions. This Synechocystis sp. (strain PCC 6701) protein is DNA-binding protein HU (hup).